Reading from the N-terminus, the 95-residue chain is Large ribosomal subunit protein bL21 (95 aa).

This sequence belongs to the bacterial ribosomal protein bL21 family. As to quaternary structure, part of the 50S ribosomal subunit. Contacts protein L20.

In terms of biological role, this protein binds to 23S rRNA in the presence of protein L20. The chain is Large ribosomal subunit protein bL21 from Rubrobacter xylanophilus (strain DSM 9941 / JCM 11954 / NBRC 16129 / PRD-1).